The chain runs to 220 residues: Ribonuclease HII (220 aa).

An RNase H type-2 domain is found at 32–220 (KHIAGIDEAG…FAPIKGRFDC (189 aa)). A divalent metal cation-binding residues include Asp38, Glu39, and Asp130.

The protein belongs to the RNase HII family. It depends on Mn(2+) as a cofactor. Mg(2+) serves as cofactor.

Its subcellular location is the cytoplasm. It catalyses the reaction Endonucleolytic cleavage to 5'-phosphomonoester.. In terms of biological role, endonuclease that specifically degrades the RNA of RNA-DNA hybrids. The sequence is that of Ribonuclease HII from Brucella suis (strain ATCC 23445 / NCTC 10510).